A 197-amino-acid chain; its full sequence is Outer-membrane lipoprotein LolB (197 aa).

The first 20 residues, 1–20 (MNRSRRLALFCLGAPLLLQA), serve as a signal peptide directing secretion. Cysteine 21 carries N-palmitoyl cysteine lipidation. Cysteine 21 carries the S-diacylglycerol cysteine lipid modification.

It belongs to the LolB family. As to quaternary structure, monomer.

The protein localises to the cell outer membrane. Plays a critical role in the incorporation of lipoproteins in the outer membrane after they are released by the LolA protein. This Cupriavidus necator (strain ATCC 17699 / DSM 428 / KCTC 22496 / NCIMB 10442 / H16 / Stanier 337) (Ralstonia eutropha) protein is Outer-membrane lipoprotein LolB.